We begin with the raw amino-acid sequence, 184 residues long: Inosine triphosphate pyrophosphatase (184 aa).

Position 10-15 (10-15 (TGNANK)) interacts with ITP. Glu-38 serves as a coordination point for Mg(2+). ITP is bound by residues Lys-50, 66–67 (DT), Lys-83, 142–145 (FGWD), Lys-163, and 168–169 (HR).

This sequence belongs to the HAM1 NTPase family. In terms of assembly, homodimer. Requires Mg(2+) as cofactor. Mn(2+) serves as cofactor.

It localises to the cytoplasm. Its subcellular location is the nucleus. The catalysed reaction is ITP + H2O = IMP + diphosphate + H(+). The enzyme catalyses dITP + H2O = dIMP + diphosphate + H(+). It carries out the reaction XTP + H2O = XMP + diphosphate + H(+). In terms of biological role, pyrophosphatase that hydrolyzes non-canonical purine nucleotides such as inosine triphosphate (ITP), deoxyinosine triphosphate (dITP) or xanthosine 5'-triphosphate (XTP) to their respective monophosphate derivatives. The enzyme does not distinguish between the deoxy- and ribose forms. Probably excludes non-canonical purines from RNA and DNA precursor pools, thus preventing their incorporation into RNA and DNA and avoiding chromosomal lesions. In Fusarium vanettenii (strain ATCC MYA-4622 / CBS 123669 / FGSC 9596 / NRRL 45880 / 77-13-4) (Fusarium solani subsp. pisi), this protein is Inosine triphosphate pyrophosphatase.